Consider the following 452-residue polypeptide: Phosphoglucosamine mutase (452 aa).

The active-site Phosphoserine intermediate is the Ser-104. Mg(2+) contacts are provided by Ser-104, Asp-246, Asp-248, and Asp-250. The residue at position 104 (Ser-104) is a Phosphoserine.

The protein belongs to the phosphohexose mutase family. The cofactor is Mg(2+). Post-translationally, activated by phosphorylation.

The catalysed reaction is alpha-D-glucosamine 1-phosphate = D-glucosamine 6-phosphate. Its function is as follows. Catalyzes the conversion of glucosamine-6-phosphate to glucosamine-1-phosphate. This Streptomyces griseus subsp. griseus (strain JCM 4626 / CBS 651.72 / NBRC 13350 / KCC S-0626 / ISP 5235) protein is Phosphoglucosamine mutase.